Reading from the N-terminus, the 529-residue chain is Inosine-5'-monophosphate dehydrogenase (529 aa).

2 CBS domains span residues 129–185 (MVTD…SKQV) and 189–246 (MTKA…PLAT). Residues Asp-283 and 334 to 336 (GVG) each bind NAD(+). Residues Gly-336 and Gly-338 each coordinate K(+). Ser-339 serves as a coordination point for IMP. Cys-341 is a K(+) binding site. The Thioimidate intermediate role is filled by Cys-341. IMP is bound by residues 374–376 (DGG), 397–398 (GS), and 421–425 (YRGMG). The active-site Proton acceptor is the Arg-443. Glu-458 serves as a coordination point for IMP. Positions 511, 512, and 513 each coordinate K(+).

This sequence belongs to the IMPDH/GMPR family. As to quaternary structure, homotetramer. It depends on K(+) as a cofactor.

The catalysed reaction is IMP + NAD(+) + H2O = XMP + NADH + H(+). It functions in the pathway purine metabolism; XMP biosynthesis via de novo pathway; XMP from IMP: step 1/1. Mycophenolic acid (MPA) is a non-competitive inhibitor that prevents formation of the closed enzyme conformation by binding to the same site as the amobile flap. In contrast, mizoribine monophosphate (MZP) is a competitive inhibitor that induces the closed conformation. MPA is a potent inhibitor of mammalian IMPDHs but a poor inhibitor of the bacterial enzymes. MZP is a more potent inhibitor of bacterial IMPDH. Its function is as follows. Catalyzes the conversion of inosine 5'-phosphate (IMP) to xanthosine 5'-phosphate (XMP), the first committed and rate-limiting step in the de novo synthesis of guanine nucleotides, and therefore plays an important role in the regulation of cell growth. The sequence is that of Inosine-5'-monophosphate dehydrogenase from Mycobacterium bovis (strain ATCC BAA-935 / AF2122/97).